A 139-amino-acid chain; its full sequence is Protein cornichon homolog 4 (139 aa).

3 helical membrane passes run 5 to 25 (VFVF…YFII), 57 to 77 (IVTV…NLPV), and 118 to 138 (LGFH…ALIN).

The protein belongs to the cornichon family. As to quaternary structure, interacts with Sec23/24 complex components SEC24B and SEC24D. Interacts with CCR5. Interacts with ADRB2 in the early secretory pathway.

The protein resides in the membrane. It is found in the endoplasmic reticulum. Its subcellular location is the endoplasmic reticulum-Golgi intermediate compartment. Its function is as follows. Involved in G protein-coupled receptors (GPCRs) trafficking from the endoplasmic reticulum to the cell surface; it promotes the exit of GPCRs from the early secretory pathway, likely through interaction with the COPII machinery. This is Protein cornichon homolog 4 (CNIH4) from Homo sapiens (Human).